Consider the following 190-residue polypeptide: Segregation and condensation protein B (190 aa).

It belongs to the ScpB family. Homodimer. Homodimerization may be required to stabilize the binding of ScpA to the Smc head domains. Component of a cohesin-like complex composed of ScpA, ScpB and the Smc homodimer, in which ScpA and ScpB bind to the head domain of Smc. The presence of the three proteins is required for the association of the complex with DNA.

It localises to the cytoplasm. Participates in chromosomal partition during cell division. May act via the formation of a condensin-like complex containing Smc and ScpA that pull DNA away from mid-cell into both cell halves. This chain is Segregation and condensation protein B, found in Bacillus cereus (strain ZK / E33L).